We begin with the raw amino-acid sequence, 171 residues long: Transcription antitermination protein NusB (171 aa).

Belongs to the NusB family.

Involved in transcription antitermination. Required for transcription of ribosomal RNA (rRNA) genes. Binds specifically to the boxA antiterminator sequence of the ribosomal RNA (rrn) operons. The protein is Transcription antitermination protein NusB of Brucella melitensis biotype 1 (strain ATCC 23456 / CCUG 17765 / NCTC 10094 / 16M).